The sequence spans 156 residues: SsrA-binding protein (156 aa).

The interval tyrosine 134–arginine 156 is disordered.

It belongs to the SmpB family.

The protein resides in the cytoplasm. Required for rescue of stalled ribosomes mediated by trans-translation. Binds to transfer-messenger RNA (tmRNA), required for stable association of tmRNA with ribosomes. tmRNA and SmpB together mimic tRNA shape, replacing the anticodon stem-loop with SmpB. tmRNA is encoded by the ssrA gene; the 2 termini fold to resemble tRNA(Ala) and it encodes a 'tag peptide', a short internal open reading frame. During trans-translation Ala-aminoacylated tmRNA acts like a tRNA, entering the A-site of stalled ribosomes, displacing the stalled mRNA. The ribosome then switches to translate the ORF on the tmRNA; the nascent peptide is terminated with the 'tag peptide' encoded by the tmRNA and targeted for degradation. The ribosome is freed to recommence translation, which seems to be the essential function of trans-translation. This Latilactobacillus sakei subsp. sakei (strain 23K) (Lactobacillus sakei subsp. sakei) protein is SsrA-binding protein.